The sequence spans 302 residues: Transmembrane protein 191C (302 aa).

Disordered stretches follow at residues 1–21 (MAAT…GRQR) and 54–73 (LRRR…EAAR). Residues 5–160 (QELLLQLQKD…EKLQQDALQT (156 aa)) are a coiled coil. The helical transmembrane segment at 238 to 258 (VLGALQVLLTLPLLFLGLSLL) threads the bilayer.

This sequence belongs to the TMEM191 family.

The protein localises to the membrane. The protein is Transmembrane protein 191C of Homo sapiens (Human).